The following is a 373-amino-acid chain: Leucoanthocyanidin dioxygenase 2 (373 aa).

A Fe2OG dioxygenase domain is found at 216-315 (LLLQLKINYY…RVSWVVFCEP (100 aa)). Residues His240, Asp242, and His296 each coordinate Fe cation. Position 306 (Arg306) interacts with 2-oxoglutarate.

Belongs to the iron/ascorbate-dependent oxidoreductase family. L-ascorbate serves as cofactor. The cofactor is Fe(2+).

It carries out the reaction a (2R,3S,4S)-leucoanthocyanidin + 2-oxoglutarate + O2 = a 4-H-anthocyanidin with a 3-hydroxy group + succinate + CO2 + 2 H2O. It functions in the pathway pigment biosynthesis; anthocyanin biosynthesis. Involved in anthocyanin and protoanthocyanidin biosynthesis by catalyzing the oxidation of leucoanthocyanidins into anthocyanidins. The sequence is that of Leucoanthocyanidin dioxygenase 2 from Oryza sativa subsp. japonica (Rice).